The sequence spans 327 residues: Lipoyl synthase (327 aa).

Residues Cys72, Cys77, Cys83, Cys98, Cys102, Cys105, and Ser313 each coordinate [4Fe-4S] cluster. The region spanning 83–302 (CWSHGTATIM…RKVGLEKGFL (220 aa)) is the Radical SAM core domain.

This sequence belongs to the radical SAM superfamily. Lipoyl synthase family. [4Fe-4S] cluster serves as cofactor.

Its subcellular location is the cytoplasm. It catalyses the reaction [[Fe-S] cluster scaffold protein carrying a second [4Fe-4S](2+) cluster] + N(6)-octanoyl-L-lysyl-[protein] + 2 oxidized [2Fe-2S]-[ferredoxin] + 2 S-adenosyl-L-methionine + 4 H(+) = [[Fe-S] cluster scaffold protein] + N(6)-[(R)-dihydrolipoyl]-L-lysyl-[protein] + 4 Fe(3+) + 2 hydrogen sulfide + 2 5'-deoxyadenosine + 2 L-methionine + 2 reduced [2Fe-2S]-[ferredoxin]. It participates in protein modification; protein lipoylation via endogenous pathway; protein N(6)-(lipoyl)lysine from octanoyl-[acyl-carrier-protein]: step 2/2. Catalyzes the radical-mediated insertion of two sulfur atoms into the C-6 and C-8 positions of the octanoyl moiety bound to the lipoyl domains of lipoate-dependent enzymes, thereby converting the octanoylated domains into lipoylated derivatives. This Francisella tularensis subsp. novicida (strain U112) protein is Lipoyl synthase.